The following is a 403-amino-acid chain: Chalcone synthase 3 (403 aa).

Cys-170 is an active-site residue.

The protein belongs to the thiolase-like superfamily. Chalcone/stilbene synthases family.

It carries out the reaction (E)-4-coumaroyl-CoA + 3 malonyl-CoA + 3 H(+) = 2',4,4',6'-tetrahydroxychalcone + 3 CO2 + 4 CoA. Its pathway is secondary metabolite biosynthesis; flavonoid biosynthesis. Functionally, the primary product of this enzyme is 4,2',4',6'-tetrahydroxychalcone (also termed naringenin-chalcone or chalcone) which can under specific conditions spontaneously isomerize into naringenin. This Gerbera hybrida (Daisy) protein is Chalcone synthase 3 (CHS3).